A 1188-amino-acid polypeptide reads, in one-letter code: Probable phosphoenolpyruvate synthase (1188 aa).

Residues 536–670 (LGGAVLSDGH…LIVGLYRLGI (135 aa)) form the DOD-type homing endonuclease domain. The active-site Tele-phosphohistidine intermediate is H824. Substrate-binding residues include R917, R964, E1061, G1083, T1084, N1085, and D1086. A Mg(2+)-binding site is contributed by E1061. D1086 lines the Mg(2+) pocket. Catalysis depends on C1133, which acts as the Proton donor.

It belongs to the PEP-utilizing enzyme family. Mg(2+) serves as cofactor. In terms of processing, this protein undergoes a protein self splicing that involves a post-translational excision of the intervening region (intein) followed by peptide ligation.

It carries out the reaction pyruvate + ATP + H2O = phosphoenolpyruvate + AMP + phosphate + 2 H(+). The protein operates within carbohydrate biosynthesis; gluconeogenesis. In terms of biological role, catalyzes the phosphorylation of pyruvate to phosphoenolpyruvate. The polypeptide is Probable phosphoenolpyruvate synthase (ppsA) (Methanocaldococcus jannaschii (strain ATCC 43067 / DSM 2661 / JAL-1 / JCM 10045 / NBRC 100440) (Methanococcus jannaschii)).